Consider the following 205-residue polypeptide: Small ribosomal subunit protein uS2 (205 aa).

Belongs to the universal ribosomal protein uS2 family.

This chain is Small ribosomal subunit protein uS2 (rps2), found in Aeropyrum pernix (strain ATCC 700893 / DSM 11879 / JCM 9820 / NBRC 100138 / K1).